We begin with the raw amino-acid sequence, 229 residues long: Peptide methionine sulfoxide reductase B3, chloroplastic (229 aa).

The transit peptide at 1–71 (MGVQHLLKLR…NHNQWAASRC (71 aa)) directs the protein to the chloroplast. Residues 102–223 (EEEWEAILSP…NSISLKFIPA (122 aa)) enclose the MsrB domain. 4 residues coordinate Zn(2+): cysteine 141, cysteine 144, cysteine 187, and cysteine 190. Cysteines 159 and 212 form a disulfide. Residue cysteine 212 is the Nucleophile of the active site.

Belongs to the MsrB Met sulfoxide reductase family. Zn(2+) serves as cofactor.

It is found in the plastid. Its subcellular location is the chloroplast. The catalysed reaction is L-methionyl-[protein] + [thioredoxin]-disulfide + H2O = L-methionyl-(R)-S-oxide-[protein] + [thioredoxin]-dithiol. In terms of biological role, catalyzes the reduction of methionine sulfoxide (MetSO) to methionine in proteins. Plays a protective role against oxidative stress by restoring activity to proteins that have been inactivated by methionine oxidation. MSRB family specifically reduces the MetSO R-enantiomer. This is Peptide methionine sulfoxide reductase B3, chloroplastic (MSRB3) from Oryza sativa subsp. japonica (Rice).